Here is a 150-residue protein sequence, read N- to C-terminus: Large ribosomal subunit protein bL9 (150 aa).

It belongs to the bacterial ribosomal protein bL9 family.

In terms of biological role, binds to the 23S rRNA. In Colwellia psychrerythraea (strain 34H / ATCC BAA-681) (Vibrio psychroerythus), this protein is Large ribosomal subunit protein bL9.